Consider the following 744-residue polypeptide: Deleted in azoospermia protein 1 (744 aa).

Residues 1–10 (MSAANPETPN) show a composition bias toward polar residues. The interval 1–27 (MSAANPETPNSTISREASTQSSSAAAS) is disordered. A compositionally biased stretch (low complexity) spans 11–27 (STISREASTQSSSAAAS). The RRM 1 domain occupies 40-115 (NTVFVGGIDA…KKLKLGPAIR (76 aa)). Residues 163 to 175 (QHVQSAANPETPN) show a composition bias toward polar residues. A disordered region spans residues 163-192 (QHVQSAANPETPNSTISREASTQSSSAAAS). The span at 176 to 192 (STISREASTQSSSAAAS) shows a compositional bias: low complexity. An RRM 2 domain is found at 205–280 (NTVFVGGIDA…KKLKLGPAIR (76 aa)). The segment covering 328–340 (QHVQSAANPETPN) has biased composition (polar residues). A disordered region spans residues 328–357 (QHVQSAANPETPNSTISREASTQSSSAAAS). Positions 341–357 (STISREASTQSSSAAAS) are enriched in low complexity. Positions 370 to 445 (NTVFVGGIDA…KKLKLGPAIR (76 aa)) constitute an RRM 3 domain. DAZ domains follow at residues 497 to 520 (AYSA…YNYQ), 521 to 544 (EYPT…YNYQ), 545 to 568 (PFPA…YNYQ), 569 to 592 (AFPA…YNYQ), 593 to 616 (PFPA…YNYQ), 617 to 640 (AFPA…YNYQ), 641 to 664 (AFPA…YNYQ), 665 to 688 (AFPA…YNYQ), and 689 to 712 (AFPA…YNYQ).

This sequence belongs to the RRM DAZ family. In terms of assembly, forms a heterodimer with BOLL and DAZL. Interacts with PUM2, DAZAP1, DAZAP2, DZIP1 and DZIP3. As to expression, testis-specific. Expression restricted to premeiotic germ cells, particularly in spermatogonia (at protein level).

Its subcellular location is the cytoplasm. The protein localises to the nucleus. Functionally, RNA-binding protein that plays an essential role in spermatogenesis. May act by binding to the 3'-UTR of mRNAs and regulating their translation. Promotes germ-cell progression to meiosis and formation of haploid germ cells. The sequence is that of Deleted in azoospermia protein 1 (DAZ1) from Homo sapiens (Human).